Reading from the N-terminus, the 24-residue chain is Brevinin-1Ecb (24 aa).

A disulfide bridge connects residues Cys-18 and Cys-24.

Expressed by the skin glands.

It is found in the secreted. Shows antibacterial activity against representative Gram-negative and Gram-positive bacterial species, and hemolytic activity. This chain is Brevinin-1Ecb, found in Pelophylax ridibundus (Marsh frog).